The chain runs to 454 residues: Bifunctional protein GlmU (454 aa).

The interval 1-240 is pyrophosphorylase; that stretch reads MNVSVVILAA…EEEFMGVNSK (240 aa). UDP-N-acetyl-alpha-D-glucosamine contacts are provided by residues 8 to 11, Lys22, and 87 to 88; these read LAAG and GT. Residue Asp119 participates in Mg(2+) binding. Positions 152, 166, 181, and 238 each coordinate UDP-N-acetyl-alpha-D-glucosamine. Residue Asn238 participates in Mg(2+) binding. The segment at 241–261 is linker; that stretch reads IQLACAQEIMLQRLREKAMEQ. Residues 262–454 are N-acetyltransferase; that stretch reads GVIMNLPHTI…SDKNEEKKEQ (193 aa). UDP-N-acetyl-alpha-D-glucosamine-binding residues include Arg325 and Lys342. His353 functions as the Proton acceptor in the catalytic mechanism. The UDP-N-acetyl-alpha-D-glucosamine site is built by Tyr356 and Asn367. Acetyl-CoA-binding positions include Ala370, 376–377, Ser395, Ala413, and Arg430; that span reads NY.

It in the N-terminal section; belongs to the N-acetylglucosamine-1-phosphate uridyltransferase family. The protein in the C-terminal section; belongs to the transferase hexapeptide repeat family. As to quaternary structure, homotrimer. The cofactor is Mg(2+).

It localises to the cytoplasm. It catalyses the reaction alpha-D-glucosamine 1-phosphate + acetyl-CoA = N-acetyl-alpha-D-glucosamine 1-phosphate + CoA + H(+). The enzyme catalyses N-acetyl-alpha-D-glucosamine 1-phosphate + UTP + H(+) = UDP-N-acetyl-alpha-D-glucosamine + diphosphate. The protein operates within nucleotide-sugar biosynthesis; UDP-N-acetyl-alpha-D-glucosamine biosynthesis; N-acetyl-alpha-D-glucosamine 1-phosphate from alpha-D-glucosamine 6-phosphate (route II): step 2/2. It participates in nucleotide-sugar biosynthesis; UDP-N-acetyl-alpha-D-glucosamine biosynthesis; UDP-N-acetyl-alpha-D-glucosamine from N-acetyl-alpha-D-glucosamine 1-phosphate: step 1/1. It functions in the pathway bacterial outer membrane biogenesis; LPS lipid A biosynthesis. Its function is as follows. Catalyzes the last two sequential reactions in the de novo biosynthetic pathway for UDP-N-acetylglucosamine (UDP-GlcNAc). The C-terminal domain catalyzes the transfer of acetyl group from acetyl coenzyme A to glucosamine-1-phosphate (GlcN-1-P) to produce N-acetylglucosamine-1-phosphate (GlcNAc-1-P), which is converted into UDP-GlcNAc by the transfer of uridine 5-monophosphate (from uridine 5-triphosphate), a reaction catalyzed by the N-terminal domain. This is Bifunctional protein GlmU from Helicobacter hepaticus (strain ATCC 51449 / 3B1).